Here is a 102-residue protein sequence, read N- to C-terminus: Small ribosomal subunit protein uS10 (102 aa).

Belongs to the universal ribosomal protein uS10 family. Part of the 30S ribosomal subunit.

Functionally, involved in the binding of tRNA to the ribosomes. The chain is Small ribosomal subunit protein uS10 from Thermosipho africanus (strain TCF52B).